The primary structure comprises 35 residues: MEALVYTFLLIGTLGIIFFAIFFREPPRLPVKGKK.

The helical transmembrane segment at 3-23 threads the bilayer; the sequence is ALVYTFLLIGTLGIIFFAIFF.

It belongs to the PsbT family. As to quaternary structure, PSII is composed of 1 copy each of membrane proteins PsbA, PsbB, PsbC, PsbD, PsbE, PsbF, PsbH, PsbI, PsbJ, PsbK, PsbL, PsbM, PsbT, PsbY, PsbZ, Psb30/Ycf12, at least 3 peripheral proteins of the oxygen-evolving complex and a large number of cofactors. It forms dimeric complexes.

It localises to the plastid. The protein resides in the chloroplast thylakoid membrane. Functionally, found at the monomer-monomer interface of the photosystem II (PS II) dimer, plays a role in assembly and dimerization of PSII. PSII is a light-driven water plastoquinone oxidoreductase, using light energy to abstract electrons from H(2)O, generating a proton gradient subsequently used for ATP formation. The protein is Photosystem II reaction center protein T of Coleochaete orbicularis (Charophycean green alga).